The sequence spans 393 residues: Beta-1,4-galactosyltransferase 3 (393 aa).

Topologically, residues 1 to 10 (MLRRLLERPC) are cytoplasmic. A helical; Signal-anchor for type II membrane protein membrane pass occupies residues 11–31 (TLALLVGSQLAVMMYLSLGGF). The Lumenal portion of the chain corresponds to 32-393 (RSLSALFGRD…ANHTALRGSH (362 aa)). A glycan (N-linked (GlcNAc...) asparagine) is linked at N57. Residues C77 and C119 are joined by a disulfide bond. A UDP-alpha-D-galactose-binding site is contributed by 130–134 (PHRAR). The N-linked (GlcNAc...) asparagine glycan is linked to N166. UDP-alpha-D-galactose contacts are provided by residues 169–171 (FNR), 196–197 (VD), Y226, and W258. C190 and C209 form a disulfide bridge. Residue D197 coordinates Mn(2+). 260 to 263 (GEDD) lines the N-acetyl-D-glucosamine pocket. Mn(2+) is bound at residue H291. 291–293 (HRG) serves as a coordination point for UDP-alpha-D-galactose. R303 provides a ligand contact to N-acetyl-D-glucosamine. N337 and N385 each carry an N-linked (GlcNAc...) asparagine glycan. The interval 339 to 393 (TADIGTDPRGPRAPSGPRYPPGSSQAFRQEMLQRRPPARPGPLSTANHTALRGSH) is disordered.

This sequence belongs to the glycosyltransferase 7 family. Mn(2+) is required as a cofactor. Found in various tissues. Highest expression in placenta, prostate, testis, ovary, intestine and muscle, and in fetal brain.

The protein resides in the golgi apparatus. The protein localises to the golgi stack membrane. It catalyses the reaction an N-acetyl-beta-D-glucosaminyl derivative + UDP-alpha-D-galactose = a beta-D-galactosyl-(1-&gt;4)-N-acetyl-beta-D-glucosaminyl derivative + UDP + H(+). It carries out the reaction N-acetyl-D-glucosamine + UDP-alpha-D-galactose = beta-D-galactosyl-(1-&gt;4)-N-acetyl-D-glucosamine + UDP + H(+). The catalysed reaction is a beta-D-GlcNAc-(1-&gt;3)-beta-D-Gal-(1-&gt;4)-beta-D-Glc-(1&lt;-&gt;1)-Cer(d18:1(4E)) + UDP-alpha-D-galactose = a neolactoside nLc4Cer(d18:1(4E)) + UDP + H(+). The enzyme catalyses a beta-D-glucosylceramide + UDP-alpha-D-galactose = a beta-D-galactosyl-(1-&gt;4)-beta-D-glucosyl-(1&lt;-&gt;1)-ceramide + UDP + H(+). It catalyses the reaction a neolactoside IV(3)-beta-GlcNAc-nLc4Cer + UDP-alpha-D-galactose = a neolactoside nLc6Cer + UDP + H(+). Its pathway is protein modification; protein glycosylation. Responsible for the synthesis of complex-type N-linked oligosaccharides in many glycoproteins as well as the carbohydrate moieties of glycolipids. The chain is Beta-1,4-galactosyltransferase 3 from Homo sapiens (Human).